The following is a 439-amino-acid chain: ATP-dependent RNA helicase RhlB (439 aa).

The Q motif motif lies at 9 to 37 (QKFADLPLCDEVKQALNENGFEHCTPIQA). One can recognise a Helicase ATP-binding domain in the interval 40–219 (LPVLLEKKDI…YDHMNDPVKV (180 aa)). 53–60 (AQTGTGKT) serves as a coordination point for ATP. Residues 165 to 168 (DEAD) carry the DEAD box motif. One can recognise a Helicase C-terminal domain in the interval 243–390 (KLKLLHSLIE…VTSYDRDALI (148 aa)). Residues 394–439 (PPVKIHRKPHAGGRNLRDRNGSPRPSGSHRSGSGRPPRHDRTRRHS) form a disordered region. Low complexity predominate over residues 415–428 (SPRPSGSHRSGSGR). Residues 429–439 (PPRHDRTRRHS) are compositionally biased toward basic residues.

This sequence belongs to the DEAD box helicase family. RhlB subfamily. As to quaternary structure, component of the RNA degradosome, which is a multiprotein complex involved in RNA processing and mRNA degradation.

It localises to the cytoplasm. The enzyme catalyses ATP + H2O = ADP + phosphate + H(+). Functionally, DEAD-box RNA helicase involved in RNA degradation. Has RNA-dependent ATPase activity and unwinds double-stranded RNA. The polypeptide is ATP-dependent RNA helicase RhlB (Shewanella amazonensis (strain ATCC BAA-1098 / SB2B)).